Consider the following 279-residue polypeptide: Protein PHOTOPERIODIC CONTROL OF HYPOCOTYL 1-LIKE (279 aa).

Interacts with light-activated phyB. Binds directly to PIF1 and COP1. In terms of processing, ubiquitinated by COP1 in darkness; this leads to proteasomal degradation. As to expression, mainly expressed in cotyledons, hypocotyls, leaves.

It is found in the nucleus. In terms of biological role, together with PCH1, regulates growth and development adaptation to the ambient environment by controlling negatively phytochrome B (phyB) dark reversion, a temperature-dependent thermal relaxation process during which phyB reverts from the active to the inactive state. Contributes to red (R) light-triggered photomorphogenesis. Promotes various light responses such as seed germination, hypocotyl gravitropism and chlorophyll biosynthesis, via direct interaction with PIF1 and COP1. Prevents DNA-binding ability of PIF1 to negatively regulate the expressions of its target genes. Facilitates the physical interaction between phyB and PIF1 and the subsequent light-induced degradation of PIF1. The polypeptide is Protein PHOTOPERIODIC CONTROL OF HYPOCOTYL 1-LIKE (Arabidopsis thaliana (Mouse-ear cress)).